Reading from the N-terminus, the 298-residue chain is Lipoyl synthase (298 aa).

C37, C42, C48, C63, C67, C70, and S277 together coordinate [4Fe-4S] cluster. Positions 49 to 266 (WGGGTATVML…KTLAESYGFL (218 aa)) constitute a Radical SAM core domain.

The protein belongs to the radical SAM superfamily. Lipoyl synthase family. It depends on [4Fe-4S] cluster as a cofactor.

Its subcellular location is the cytoplasm. It catalyses the reaction [[Fe-S] cluster scaffold protein carrying a second [4Fe-4S](2+) cluster] + N(6)-octanoyl-L-lysyl-[protein] + 2 oxidized [2Fe-2S]-[ferredoxin] + 2 S-adenosyl-L-methionine + 4 H(+) = [[Fe-S] cluster scaffold protein] + N(6)-[(R)-dihydrolipoyl]-L-lysyl-[protein] + 4 Fe(3+) + 2 hydrogen sulfide + 2 5'-deoxyadenosine + 2 L-methionine + 2 reduced [2Fe-2S]-[ferredoxin]. Its pathway is protein modification; protein lipoylation via endogenous pathway; protein N(6)-(lipoyl)lysine from octanoyl-[acyl-carrier-protein]: step 2/2. In terms of biological role, catalyzes the radical-mediated insertion of two sulfur atoms into the C-6 and C-8 positions of the octanoyl moiety bound to the lipoyl domains of lipoate-dependent enzymes, thereby converting the octanoylated domains into lipoylated derivatives. The sequence is that of Lipoyl synthase from Myxococcus xanthus (strain DK1622).